The chain runs to 336 residues: Ketol-acid reductoisomerase (NADP(+)) (336 aa).

Positions 2–181 constitute a KARI N-terminal Rossmann domain; it reads AKVYYEKDVM…GATRAGVLET (180 aa). NADP(+) contacts are provided by residues 25–28, R48, S52, and 82–85; these read YGSQ and DELQ. The active site involves H107. G133 lines the NADP(+) pocket. The KARI C-terminal knotted domain occupies 182 to 327; that stretch reads TFKEETETDL…RQLREMMPFV (146 aa). D190, E194, E226, and E230 together coordinate Mg(2+). S251 provides a ligand contact to substrate.

It belongs to the ketol-acid reductoisomerase family. It depends on Mg(2+) as a cofactor.

It carries out the reaction (2R)-2,3-dihydroxy-3-methylbutanoate + NADP(+) = (2S)-2-acetolactate + NADPH + H(+). It catalyses the reaction (2R,3R)-2,3-dihydroxy-3-methylpentanoate + NADP(+) = (S)-2-ethyl-2-hydroxy-3-oxobutanoate + NADPH + H(+). It functions in the pathway amino-acid biosynthesis; L-isoleucine biosynthesis; L-isoleucine from 2-oxobutanoate: step 2/4. Its pathway is amino-acid biosynthesis; L-valine biosynthesis; L-valine from pyruvate: step 2/4. Functionally, involved in the biosynthesis of branched-chain amino acids (BCAA). Catalyzes an alkyl-migration followed by a ketol-acid reduction of (S)-2-acetolactate (S2AL) to yield (R)-2,3-dihydroxy-isovalerate. In the isomerase reaction, S2AL is rearranged via a Mg-dependent methyl migration to produce 3-hydroxy-3-methyl-2-ketobutyrate (HMKB). In the reductase reaction, this 2-ketoacid undergoes a metal-dependent reduction by NADPH to yield (R)-2,3-dihydroxy-isovalerate. This is Ketol-acid reductoisomerase (NADP(+)) from Bacillus cytotoxicus (strain DSM 22905 / CIP 110041 / 391-98 / NVH 391-98).